A 460-amino-acid polypeptide reads, in one-letter code: Photosystem II CP43 reaction center protein (460 aa).

Topologically, residues 1 to 35 are cytoplasmic; it reads MVTLSNTSMVGGRDLPSTGFAWWSGNARLINLSGK. A helical transmembrane segment spans residues 36 to 58; the sequence is LLGAHVAHAGLIVFWAGAMTLFE. Residues 59 to 98 are Lumenal, thylakoid-facing; it reads VAHFIPEKPMYEQGLILLPHIATLGWGVGPAGEVTDIFPF. Residues 99-121 traverse the membrane as a helical segment; sequence FVVGVLHLISSAVLGLGGIYHAL. Over 122–142 the chain is Cytoplasmic; that stretch reads RGPEVLEEYSSFFGYDWKDKN. The chain crosses the membrane as a helical span at residues 143-165; the sequence is QMTNIIGYHLILLGCGALLLVFK. The Lumenal, thylakoid segment spans residues 166-220; the sequence is AMFFGGVYDTWAPGGGDVRVITNPTLNPAIIFGYLLKAPFGGEGWIISVNNMEDI. Residues 221-240 form a helical membrane-spanning segment; sequence IGGHIWIGLICISGGIWHIL. The Cytoplasmic portion of the chain corresponds to 241–255; sequence TKPFGWARRALIWSG. A helical transmembrane segment spans residues 256–276; the sequence is EAYLSYSLGALSLMGFIASVF. Residues 277 to 411 lie on the Lumenal, thylakoid side of the membrane; it reads VWFNNTAYPS…NSFNYVSPRA (135 aa). [CaMn4O5] cluster is bound by residues E341 and R344. A helical membrane pass occupies residues 412-436; sequence WLATSHFVLGFFFLVGHLWHAGRAR. Residues 437 to 460 lie on the Cytoplasmic side of the membrane; that stretch reads AAAAGFEKGIDRETEPTLFMPDLD.

Belongs to the PsbB/PsbC family. PsbC subfamily. PSII is composed of 1 copy each of membrane proteins PsbA, PsbB, PsbC, PsbD, PsbE, PsbF, PsbH, PsbI, PsbJ, PsbK, PsbL, PsbM, PsbT, PsbX, PsbY, PsbZ, Psb30/Ycf12, peripheral proteins PsbO, CyanoQ (PsbQ), PsbU, PsbV and a large number of cofactors. It forms dimeric complexes. Binds multiple chlorophylls and provides some of the ligands for the Ca-4Mn-5O cluster of the oxygen-evolving complex. It may also provide a ligand for a Cl- that is required for oxygen evolution. PSII binds additional chlorophylls, carotenoids and specific lipids. is required as a cofactor.

Its subcellular location is the cellular thylakoid membrane. In terms of biological role, one of the components of the core complex of photosystem II (PSII). PSII binds chlorophyll and helps catalyze the primary light-induced photochemical processes of PSII. PSII is a light-driven water:plastoquinone oxidoreductase, using light energy to abstract electrons from H(2)O, generating O(2) and a proton gradient subsequently used for ATP formation. Required for correct assembly of PSII. In Synechocystis sp. (strain ATCC 27184 / PCC 6803 / Kazusa), this protein is Photosystem II CP43 reaction center protein.